The sequence spans 299 residues: Glycerol-3-phosphate dehydrogenase [NAD(P)+] (299 aa).

NADPH is bound by residues W11, R30, H31, and K79. Sn-glycerol 3-phosphate-binding residues include K79, G107, and S109. A111 contacts NADPH. Residues K161, D214, S224, R225, and N226 each contribute to the sn-glycerol 3-phosphate site. K161 (proton acceptor) is an active-site residue. R225 provides a ligand contact to NADPH. The NADPH site is built by V249 and E251.

The protein belongs to the NAD-dependent glycerol-3-phosphate dehydrogenase family.

It localises to the cytoplasm. The enzyme catalyses sn-glycerol 3-phosphate + NAD(+) = dihydroxyacetone phosphate + NADH + H(+). The catalysed reaction is sn-glycerol 3-phosphate + NADP(+) = dihydroxyacetone phosphate + NADPH + H(+). It participates in membrane lipid metabolism; glycerophospholipid metabolism. Catalyzes the reduction of the glycolytic intermediate dihydroxyacetone phosphate (DHAP) to sn-glycerol 3-phosphate (G3P), the key precursor for phospholipid synthesis. This Nitratiruptor sp. (strain SB155-2) protein is Glycerol-3-phosphate dehydrogenase [NAD(P)+].